We begin with the raw amino-acid sequence, 142 residues long: Large ribosomal subunit protein uL11 (142 aa).

The protein belongs to the universal ribosomal protein uL11 family. As to quaternary structure, part of the ribosomal stalk of the 50S ribosomal subunit. Interacts with L10 and the large rRNA to form the base of the stalk. L10 forms an elongated spine to which L12 dimers bind in a sequential fashion forming a multimeric L10(L12)X complex. One or more lysine residues are methylated.

Functionally, forms part of the ribosomal stalk which helps the ribosome interact with GTP-bound translation factors. This Maricaulis maris (strain MCS10) (Caulobacter maris) protein is Large ribosomal subunit protein uL11.